The following is a 212-amino-acid chain: Uridine kinase (212 aa).

Residue 13–20 (GGSGSGKT) coordinates ATP.

This sequence belongs to the uridine kinase family.

Its subcellular location is the cytoplasm. The enzyme catalyses uridine + ATP = UMP + ADP + H(+). The catalysed reaction is cytidine + ATP = CMP + ADP + H(+). It participates in pyrimidine metabolism; CTP biosynthesis via salvage pathway; CTP from cytidine: step 1/3. Its pathway is pyrimidine metabolism; UMP biosynthesis via salvage pathway; UMP from uridine: step 1/1. The protein is Uridine kinase of Bacillus mycoides (strain KBAB4) (Bacillus weihenstephanensis).